A 311-amino-acid chain; its full sequence is Malate dehydrogenase (311 aa).

NAD(+) is bound by residues 7 to 13 (GAAGGIG) and Asp34. Residues Arg81 and Arg87 each contribute to the substrate site. Residues Asn94 and 117-119 (ITN) contribute to the NAD(+) site. Asn119 and Arg153 together coordinate substrate. His177 functions as the Proton acceptor in the catalytic mechanism. Met227 is an NAD(+) binding site.

The protein belongs to the LDH/MDH superfamily. MDH type 1 family. As to quaternary structure, homodimer.

It catalyses the reaction (S)-malate + NAD(+) = oxaloacetate + NADH + H(+). Catalyzes the reversible oxidation of malate to oxaloacetate. In Aliivibrio salmonicida (strain LFI1238) (Vibrio salmonicida (strain LFI1238)), this protein is Malate dehydrogenase.